The chain runs to 1126 residues: MLDTESRWAIAESFFKTRGLVRQHLDSFNDFLRNKLQQVIYEQGEIVTEVPGLKIKLGKIRYEKPSIRETDKGPMREITPMEARLRNLTYSSPIFLSMIPVENNIEGEPIEIYIGDLPIMLKSVADPTSNLPIDKLIEIGEDPKDPGGYFIVNGSEKVIIAQEDLATNRVLVDYGKSGSNITHVAKVTSSAAGYRVQVMIERLKDSTIQISFATVPGRIPFAIIMRALGFVTDRDIVYAVSLDPQIQNELLPSLEQASSITSAEEALDFIGNRVAIGQKRENRIQKAEQVIDKYFLPHLGTSPEDRKKKGYYLASAVNKILELYLGRREPDDKDHYANKRVRLAGDLFTSLFRVAFKAFVKDLVYQLEKSKVRGRRLSLTALVRADIITERIRHALATGNWVGGRTGVSQLLDRTNWLSMLSHLRRVVSSLARGQPNFEARDLHGTQWGRMCPFETPEGPNSGLVKNLALLAQVSVGINESVVERVAYELGVVSVEDVIRRISEQNEDVEKYMSWSKVYLNGRLLGYYEDGKELAKKIRESRRQGKLSDEVNVAYIATDYLNEVHINCDAGRVRRPLIIVNNGTPLVDTEDIKKLKNGEITFDDLVKQGKIEFIDAEEEENAYVALNPQDLTPDHTHLEIWPSAILGIIASIIPYPEHNQSPRNTYQSAMAKQSLGLYASNYQIRTDTRAHLLHYPQMPLVQTRMLGVIGYNDRPAGANAILAIMSYTGYNMEDSIIMNKSSIERGMYRSTFFRLYSTEEVKYPGGQEDKIVTPEAGVKGYKGKDYYRLLEDNGVVSPEVEVKGGDVLIGKVSPPRFLQEFKELSPEQAKRDTSIVTRHGENGIVDLVLITETLEGNKLVKVRVRDLRIPEIGDKFATRHGQKGVVGILIDQVDMPYTAKGIVPDIILNPHALPSRMTIGQIMEAIGGKYAALSGKPVDATPFLETPKLQEMQKEILKLGHLPDSTEVVYDGRTGQKLKSRILFGIVYYQKLHHMVADKMHARARGPVQILTRQPTEGRAREGGLRFGEMERDCLIGFGTAMLIKDRLLDNSDKAVVYICDQCGYVGWYDRSKNRYVCPVHGDKSVLHPVTVSYAFKLLIQELMSMVISPRLILGEKVNLGGASNE.

4 residues coordinate Zn(2+): C1060, C1063, C1078, and H1081.

This sequence belongs to the RNA polymerase beta chain family. In terms of assembly, part of the 13-subunit RNA polymerase complex. Interacts with TFS4. (Microbial infection) Binds viral protein RIP which blocks global transcription. It depends on Zn(2+) as a cofactor.

The protein resides in the cytoplasm. The enzyme catalyses RNA(n) + a ribonucleoside 5'-triphosphate = RNA(n+1) + diphosphate. Its function is as follows. DNA-dependent RNA polymerase (RNAP) catalyzes the transcription of DNA into RNA using the four ribonucleoside triphosphates as substrates. This subunit is involved in DNA promoter recognition. The chain is DNA-directed RNA polymerase subunit Rpo2 from Sulfolobus acidocaldarius (strain ATCC 33909 / DSM 639 / JCM 8929 / NBRC 15157 / NCIMB 11770).